We begin with the raw amino-acid sequence, 513 residues long: Zinc finger protein RFP (513 aa).

The RING-type zinc-finger motif lies at 16–57 (CPVCLQYFAEPMMLDCGHNICCACLARCWGTAETNVSCPQCR). Residues Cys96, His99, Cys118, and His124 each contribute to the Zn(2+) site. The segment at 96–127 (CEKHREPLKLYCEEDQMPICVVCDRSREHRGH) adopts a B box-type zinc-finger fold. 2 coiled-coil regions span residues 132–172 (LEEA…AELL) and 282–311 (QKCL…LREA). Positions 298-492 (MQSDMEKIQE…SAAPLIICPM (195 aa)) constitute a B30.2/SPRY domain.

This sequence belongs to the TRIM/RBCC family. As to quaternary structure, homomultimerizes. Part of a complex consisting of TRIM27, USP7 and MAGEL2; directly interacts with USP7. Interacts with PML, EIF3S6, EPC1, CHD4 and EID1. Interacts with MAGED4, MAGEF1 and MAGEL2. Interacts with PTPN11. Interacts with autophagy receptor p62/SQSTM1. (Microbial infection) Interacts with M.tuberculosis PtpA, whick blocks TRIM27-promoted JNK/p38 MAPK pathway activation and cell apoptosis. In terms of assembly, (Microbial infection) Interacts with herpes simplex virus protein ICP0. As to expression, expressed in testis namely within the seminiferous tubules.

The protein resides in the nucleus. The protein localises to the cytoplasm. It is found in the PML body. Its subcellular location is the early endosome. It localises to the mitochondrion. It carries out the reaction S-ubiquitinyl-[E2 ubiquitin-conjugating enzyme]-L-cysteine + [acceptor protein]-L-lysine = [E2 ubiquitin-conjugating enzyme]-L-cysteine + N(6)-ubiquitinyl-[acceptor protein]-L-lysine.. Its pathway is protein modification; protein ubiquitination. In terms of biological role, E3 ubiquitin-protein ligase that mediates ubiquitination of various substrates and thereby plays a role in diffent processes including proliferation, innate immunity, apoptosis, immune response or autophagy. Ubiquitinates PIK3C2B and inhibits its activity by mediating the formation of 'Lys-48'-linked polyubiquitin chains; the function inhibits CD4 T-cell activation. Acts as a regulator of retrograde transport: together with MAGEL2, mediates the formation of 'Lys-63'-linked polyubiquitin chains at 'Lys-220' of WASHC1, leading to promote endosomal F-actin assembly. Has a transcriptional repressor activity by cooperating with EPC1. Induces apoptosis by activating Jun N-terminal kinase and p38 kinase and also increases caspase-3-like activity independently of mitochondrial events. May function in male germ cell development. Has DNA-binding activity and preferentially bound to double-stranded DNA. Forms a complex with and ubiquitinates the ubiquitin-specific protease USP7, which in turn deubiquitinates RIPK1 resulting in the positive regulation of TNF-alpha-induced apoptosis. In addition, acts with USP7 or PTPN11 as an inhibitor of the antiviral signaling pathway by promoting kinase TBK1 ubiquitination and degradation. Acts as a negative regulator of NOD2 signaling by mediating ubiquitination of NOD2, promoting its degradation by the proteasome. Alternatively, facilitates mitophagy via stabilization of active TBK1. Negatively regulates autophagy flux under basal conditions by directly polyubiquitinating ULK1. During starvation-induced autophagy, catalyzes non-degradative ubiquitination of the kinase STK38L promoting its activation and phosphorylation of ULK1 leading to its ubiquitination and degradation to restrain the amplitude and duration of autophagy. Its function is as follows. (Microbial infection) Positively regulates hepatitis C virus replication by suppressing type I IFN response during infection. The polypeptide is Zinc finger protein RFP (Homo sapiens (Human)).